The following is a 239-amino-acid chain: Putative CRISPR-associated endoribonuclease-like protein Cas6nc (239 aa).

It belongs to the CRISPR-associated protein Cas6/Cse3/CasE family. Monomer; homodimer when crystallized in the presence of crRNA. Varying the crRNA sequence varies degree of oligomerization and structure.

CRISPR (clustered regularly interspaced short palindromic repeat), is an adaptive immune system that provides protection against mobile genetic elements (viruses, transposable elements and conjugative plasmids). CRISPR clusters contain sequences complementary to antecedent mobile elements and target invading nucleic acids. CRISPR clusters are transcribed and processed into CRISPR RNA (crRNA), also called psiRNA (prokaryotic silencing) in this organism (Potential). The sequence is that of Putative CRISPR-associated endoribonuclease-like protein Cas6nc (cas6nc) from Pyrococcus horikoshii (strain ATCC 700860 / DSM 12428 / JCM 9974 / NBRC 100139 / OT-3).